Reading from the N-terminus, the 90-residue chain is Small ribosomal subunit protein uS15 (90 aa).

This sequence belongs to the universal ribosomal protein uS15 family. As to quaternary structure, part of the 30S ribosomal subunit. Forms a bridge to the 50S subunit in the 70S ribosome, contacting the 23S rRNA.

In terms of biological role, one of the primary rRNA binding proteins, it binds directly to 16S rRNA where it helps nucleate assembly of the platform of the 30S subunit by binding and bridging several RNA helices of the 16S rRNA. Its function is as follows. Forms an intersubunit bridge (bridge B4) with the 23S rRNA of the 50S subunit in the ribosome. The protein is Small ribosomal subunit protein uS15 of Aliarcobacter butzleri (strain RM4018) (Arcobacter butzleri).